The following is a 694-amino-acid chain: uncharacterized protein (694 aa).

The stretch at histidine 15–lysine 51 forms a coiled coil. Disordered regions lie at residues leucine 259–tyrosine 286, glutamine 461–aspartate 490, and asparagine 643–threonine 680. 2 stretches are compositionally biased toward polar residues: residues serine 272–glutamate 283 and aspartate 476–aspartate 490. The segment covering serine 663–arginine 677 has biased composition (low complexity).

This is an uncharacterized protein from Homo sapiens (Human).